The chain runs to 380 residues: 8-amino-7-oxononanoate synthase (380 aa).

R26 serves as a coordination point for substrate. 104–105 is a pyridoxal 5'-phosphate binding site; the sequence is GY. H129 contacts substrate. Residues S175, 200 to 203, and 232 to 235 each bind pyridoxal 5'-phosphate; these read DEAH and TLSK. An N6-(pyridoxal phosphate)lysine modification is found at K235. T345 provides a ligand contact to substrate.

This sequence belongs to the class-II pyridoxal-phosphate-dependent aminotransferase family. BioF subfamily. Homodimer. It depends on pyridoxal 5'-phosphate as a cofactor.

It carries out the reaction 6-carboxyhexanoyl-[ACP] + L-alanine + H(+) = (8S)-8-amino-7-oxononanoate + holo-[ACP] + CO2. It participates in cofactor biosynthesis; biotin biosynthesis. Catalyzes the decarboxylative condensation of pimeloyl-[acyl-carrier protein] and L-alanine to produce 8-amino-7-oxononanoate (AON), [acyl-carrier protein], and carbon dioxide. This chain is 8-amino-7-oxononanoate synthase, found in Mycolicibacterium vanbaalenii (strain DSM 7251 / JCM 13017 / BCRC 16820 / KCTC 9966 / NRRL B-24157 / PYR-1) (Mycobacterium vanbaalenii).